We begin with the raw amino-acid sequence, 440 residues long: Protein dumpy-20 (440 aa).

The disordered stretch occupies residues 96–119 (ILSDPSLHGSNSSSSTSDVGSSVD). A compositionally biased stretch (low complexity) spans 98–119 (SDPSLHGSNSSSSTSDVGSSVD). BED-type zinc fingers lie at residues 137–186 (PTEN…YQKV) and 350–399 (KTEH…YNDV). The Zn(2+) site is built by cysteine 156, cysteine 159, histidine 174, histidine 179, cysteine 369, cysteine 372, histidine 387, and histidine 392.

May be directly or indirectly involved in cuticle function. This Caenorhabditis elegans protein is Protein dumpy-20 (dpy-20).